Consider the following 205-residue polypeptide: GTP cyclohydrolase-2 (205 aa).

49-53 (RIHSE) provides a ligand contact to GTP. 3 residues coordinate Zn(2+): Cys-54, Cys-65, and Cys-67. GTP contacts are provided by residues Gln-70, 92–94 (EGR), and Thr-114. Residue Asp-126 is the Proton acceptor of the active site. The active-site Nucleophile is Arg-128. 2 residues coordinate GTP: Thr-149 and Lys-154.

This sequence belongs to the GTP cyclohydrolase II family. It depends on Zn(2+) as a cofactor.

The enzyme catalyses GTP + 4 H2O = 2,5-diamino-6-hydroxy-4-(5-phosphoribosylamino)-pyrimidine + formate + 2 phosphate + 3 H(+). It functions in the pathway cofactor biosynthesis; riboflavin biosynthesis; 5-amino-6-(D-ribitylamino)uracil from GTP: step 1/4. Functionally, catalyzes the conversion of GTP to 2,5-diamino-6-ribosylamino-4(3H)-pyrimidinone 5'-phosphate (DARP), formate and pyrophosphate. The chain is GTP cyclohydrolase-2 from Shewanella sediminis (strain HAW-EB3).